The chain runs to 378 residues: Ribosomal RNA large subunit methyltransferase G (378 aa).

It belongs to the methyltransferase superfamily. RlmG family.

It is found in the cytoplasm. It carries out the reaction guanosine(1835) in 23S rRNA + S-adenosyl-L-methionine = N(2)-methylguanosine(1835) in 23S rRNA + S-adenosyl-L-homocysteine + H(+). Its function is as follows. Specifically methylates the guanine in position 1835 (m2G1835) of 23S rRNA. The chain is Ribosomal RNA large subunit methyltransferase G from Salmonella paratyphi A (strain ATCC 9150 / SARB42).